The sequence spans 488 residues: Ribosomal RNA small subunit methyltransferase F (488 aa).

S-adenosyl-L-methionine-binding positions include 135–141 (ASAPGSK), Glu159, Asp186, and Asp204. The active-site Nucleophile is Cys257.

The protein belongs to the class I-like SAM-binding methyltransferase superfamily. RsmB/NOP family.

Its subcellular location is the cytoplasm. The catalysed reaction is cytidine(1407) in 16S rRNA + S-adenosyl-L-methionine = 5-methylcytidine(1407) in 16S rRNA + S-adenosyl-L-homocysteine + H(+). Its function is as follows. Specifically methylates the cytosine at position 1407 (m5C1407) of 16S rRNA. The chain is Ribosomal RNA small subunit methyltransferase F from Shewanella pealeana (strain ATCC 700345 / ANG-SQ1).